Reading from the N-terminus, the 710-residue chain is MRYIVSPQLVLQVGKGQEVERALYLTPYDYIDEKSPIYYFLRSHLNIQQPEIVKRHILLTLRMTQLKGYLGNLLDIKDDIIIYSHKNNLEYSYVDNTIFNPFVYTQKKTLLKNDSFLYNVYPGACDFLVIWVARACDTSIPEFGSYEDVDNNIIKFETMLMEVFPQLDLDITVESKFNNIFRTNLKLTGLKKIIQRVQDLDINYKSLLSRYDEHFINMTGNHFILNDEQLNLSIWDLDGTLALSSDGDTVMINNVKLFTDLVSDIDTQMERIKGDITYKVHLATPINSRIKLDIETSFIFIETATNNILLSSDKKISIILAKNHISIKVKNHIPNIEKYFTFLVIAINAMFNSVQKSADFTKVETVYWSRICQNTKNKNRKPIIINYLDPGMKKISNNFYRSDEKEVFINDNGIMFTCMDPLGKYNKVGFLNIFHDMWKYCIPCCFLHDQSHRSTFSSCVHQIDVEKKIVSPYILNFGKVVTESKMSFLPIIFDAFLNDGMTANMEQDNKRLKETSGYHIVRCCAGDDIVRLRTTSDIIQFVNEDKNILIVNDMVYFPMNASDIGKKIHILIQEIVHEVMIVKKKESSDKIDFFPPNYKLLKDLFPKQTIQTPIQSDAGMVLTTDGFYIDGKLFNEDLSSKYVTFTKNVIASDAVAKYFSPLFKYVISEAKDRFIKTWMINIMIHMNVDPNNIIPTLEKYYPNSGRAQIN.

This sequence belongs to the poxviridae VETF large subunit family. As to quaternary structure, heterodimer of a 70 kDa and a 82 kDa subunit. Part of the early transcription complex composed of ETF, RAP94/OPG109, and the DNA-directed RNA polymerase.

The protein resides in the virion. Its function is as follows. Acts with RNA polymerase to initiate transcription from early gene promoters. Is recruited by the RPO-associated protein of 94 kDa RAP94/OPG109 to form the early transcription complex, which also contains the core RNA polymerase. ETF heterodimer binds to early gene promoters. This Vaccinia virus (strain Ankara) (VACV) protein is Early transcription factor 82 kDa subunit (OPG133).